A 387-amino-acid chain; its full sequence is 8-amino-7-oxononanoate synthase (387 aa).

Arg-20 contributes to the substrate binding site. Residue 107 to 108 (GY) participates in pyridoxal 5'-phosphate binding. A substrate-binding site is contributed by His-132. Pyridoxal 5'-phosphate-binding residues include Ser-181, His-209, and Thr-238. Lys-241 carries the N6-(pyridoxal phosphate)lysine modification. Thr-355 is a binding site for substrate.

This sequence belongs to the class-II pyridoxal-phosphate-dependent aminotransferase family. BioF subfamily. In terms of assembly, homodimer. Pyridoxal 5'-phosphate serves as cofactor.

The enzyme catalyses 6-carboxyhexanoyl-[ACP] + L-alanine + H(+) = (8S)-8-amino-7-oxononanoate + holo-[ACP] + CO2. It functions in the pathway cofactor biosynthesis; biotin biosynthesis. Catalyzes the decarboxylative condensation of pimeloyl-[acyl-carrier protein] and L-alanine to produce 8-amino-7-oxononanoate (AON), [acyl-carrier protein], and carbon dioxide. The protein is 8-amino-7-oxononanoate synthase of Dechloromonas aromatica (strain RCB).